Here is a 109-residue protein sequence, read N- to C-terminus: Aquaporin-2 (109 aa).

Residues 1–6 are Cytoplasmic-facing; the sequence is SIAFSR. A helical transmembrane segment spans residues 7-27; the sequence is AVLAEFLATLLFVFFGLGSAL. The Extracellular segment spans residues 28-35; that stretch reads NWPQAMPS. A helical transmembrane segment spans residues 36 to 54; sequence VLQIAMAFGLAIGTLVQAL. Residues 55 to 59 are Cytoplasmic-facing; it reads GHVSG. Positions 60–69 form an intramembrane region, discontinuously helical; that stretch reads AHINPAVTVA. An NPA 1 motif is present at residues 63-65; that stretch reads NPA. Over 70-80 the chain is Cytoplasmic; it reads CLVGCHVSFLR. Residues 81–102 traverse the membrane as a helical segment; that stretch reads AAFYVAAQLLGAVAGAALLHEI. Residues 103-109 are Extracellular-facing; the sequence is TPPDIRR.

This sequence belongs to the MIP/aquaporin (TC 1.A.8) family. In terms of assembly, homotetramer. Serine phosphorylation is necessary and sufficient for expression at the apical membrane. Endocytosis is not phosphorylation-dependent. In terms of processing, N-glycosylated.

The protein localises to the apical cell membrane. It localises to the basolateral cell membrane. The protein resides in the cell membrane. Its subcellular location is the cytoplasmic vesicle membrane. It is found in the golgi apparatus. The protein localises to the trans-Golgi network membrane. It catalyses the reaction H2O(in) = H2O(out). It carries out the reaction glycerol(in) = glycerol(out). In terms of biological role, forms a water-specific channel that provides the plasma membranes of renal collecting duct with high permeability to water, thereby permitting water to move in the direction of an osmotic gradient. Plays an essential role in renal water homeostasis. Could also be permeable to glycerol. This Equus caballus (Horse) protein is Aquaporin-2.